A 414-amino-acid polypeptide reads, in one-letter code: MRLSLPRLKMPRLPGFSILVWISTALKGWVMGSREKDTDSLIMYDRTLLWLTFGLAAIGFIMVTSASMPIGQRLTNDPFFFAKRDGVYLILAFILAIITLRLPMEFWQRYSATMLLGSIILLMIVLVVGSSVKGASRWIDLGLLRIQPAELTKLSLFCYIANYLVRKGDEVRNNLRGFLKPMGVILVLAVLLLAQPDLGTVVVLFVTTLAMLFLAGAKLWQFIAIIGMGISAVVLLILAEPYRIRRVTAFWNPWEDPFGSGYQLTQSLMAFGRGELWGQGLGNSVQKLEYLPEAHTDFIFAIIGEELGYVGVVLALLMVFFVAFRAMSIGRKALEIDHRFSGFLACSIGIWFSFQALVNVGAAAGMLPTKGLTLPLISYGGSSLLIMSTAIMMLLRIDYETRLEKAQAFVRGSR.

At 1 to 12 (MRLSLPRLKMPR) the chain is on the cytoplasmic side. Residues 13–33 (LPGFSILVWISTALKGWVMGS) form a helical membrane-spanning segment. Residues 34–47 (REKDTDSLIMYDRT) lie on the Periplasmic side of the membrane. Residues 48–68 (LLWLTFGLAAIGFIMVTSASM) form a helical membrane-spanning segment. At 69–86 (PIGQRLTNDPFFFAKRDG) the chain is on the cytoplasmic side. A helical membrane pass occupies residues 87-107 (VYLILAFILAIITLRLPMEFW). Residues 108–111 (QRYS) lie on the Periplasmic side of the membrane. The helical transmembrane segment at 112-132 (ATMLLGSIILLMIVLVVGSSV) threads the bilayer. Over 133–174 (KGASRWIDLGLLRIQPAELTKLSLFCYIANYLVRKGDEVRNN) the chain is Cytoplasmic. The chain crosses the membrane as a helical span at residues 175–194 (LRGFLKPMGVILVLAVLLLA). Topologically, residues 195–197 (QPD) are periplasmic. Residues 198-217 (LGTVVVLFVTTLAMLFLAGA) traverse the membrane as a helical segment. Position 218 (Lys-218) is a topological domain, cytoplasmic. Residues 219–239 (LWQFIAIIGMGISAVVLLILA) traverse the membrane as a helical segment. At 240–301 (EPYRIRRVTA…PEAHTDFIFA (62 aa)) the chain is on the periplasmic side. Residues 302–322 (IIGEELGYVGVVLALLMVFFV) form a helical membrane-spanning segment. The Cytoplasmic segment spans residues 323-342 (AFRAMSIGRKALEIDHRFSG). A helical transmembrane segment spans residues 343-363 (FLACSIGIWFSFQALVNVGAA). Residues 364–373 (AGMLPTKGLT) lie on the Periplasmic side of the membrane. Residues 374 to 394 (LPLISYGGSSLLIMSTAIMML) form a helical membrane-spanning segment. Residues 395-414 (LRIDYETRLEKAQAFVRGSR) lie on the Cytoplasmic side of the membrane.

Belongs to the SEDS family. FtsW subfamily.

The protein localises to the cell inner membrane. It carries out the reaction [GlcNAc-(1-&gt;4)-Mur2Ac(oyl-L-Ala-gamma-D-Glu-L-Lys-D-Ala-D-Ala)](n)-di-trans,octa-cis-undecaprenyl diphosphate + beta-D-GlcNAc-(1-&gt;4)-Mur2Ac(oyl-L-Ala-gamma-D-Glu-L-Lys-D-Ala-D-Ala)-di-trans,octa-cis-undecaprenyl diphosphate = [GlcNAc-(1-&gt;4)-Mur2Ac(oyl-L-Ala-gamma-D-Glu-L-Lys-D-Ala-D-Ala)](n+1)-di-trans,octa-cis-undecaprenyl diphosphate + di-trans,octa-cis-undecaprenyl diphosphate + H(+). It functions in the pathway cell wall biogenesis; peptidoglycan biosynthesis. Functionally, peptidoglycan polymerase that is essential for cell division. The sequence is that of Probable peptidoglycan glycosyltransferase FtsW from Escherichia coli O157:H7.